We begin with the raw amino-acid sequence, 261 residues long: Na(+)-translocating NADH-quinone reductase subunit C (261 aa).

The helical transmembrane segment at 12–32 threads the bilayer; sequence LGVVVGLSLVCSIIVSTAAVG. T229 is subject to FMN phosphoryl threonine.

As to quaternary structure, composed of six subunits; NqrA, NqrB, NqrC, NqrD, NqrE and NqrF. Requires FMN as cofactor.

It is found in the cell inner membrane. It carries out the reaction a ubiquinone + n Na(+)(in) + NADH + H(+) = a ubiquinol + n Na(+)(out) + NAD(+). Its function is as follows. NQR complex catalyzes the reduction of ubiquinone-1 to ubiquinol by two successive reactions, coupled with the transport of Na(+) ions from the cytoplasm to the periplasm. NqrA to NqrE are probably involved in the second step, the conversion of ubisemiquinone to ubiquinol. In Vibrio campbellii (strain ATCC BAA-1116), this protein is Na(+)-translocating NADH-quinone reductase subunit C.